The sequence spans 65 residues: Large ribosomal subunit protein bL35 (65 aa).

It belongs to the bacterial ribosomal protein bL35 family.

The polypeptide is Large ribosomal subunit protein bL35 (Enterobacter sp. (strain 638)).